The sequence spans 268 residues: Trans-aconitate 2-methyltransferase (268 aa).

The protein belongs to the methyltransferase superfamily. Tam family.

It localises to the cytoplasm. It carries out the reaction trans-aconitate + S-adenosyl-L-methionine = (E)-3-(methoxycarbonyl)pent-2-enedioate + S-adenosyl-L-homocysteine. Its function is as follows. Catalyzes the S-adenosylmethionine monomethyl esterification of trans-aconitate. The protein is Trans-aconitate 2-methyltransferase of Delftia acidovorans (strain DSM 14801 / SPH-1).